The sequence spans 442 residues: tRNA-2-methylthio-N(6)-dimethylallyladenosine synthase (442 aa).

The 119-residue stretch at 2-120 (KKVFIRTFGC…LPKMIVDKET (119 aa)) folds into the MTTase N-terminal domain. Residues C11, C49, C83, C157, C161, and C164 each contribute to the [4Fe-4S] cluster site. The 233-residue stretch at 143–375 (RVEGGAAFVS…NEVIEAETAR (233 aa)) folds into the Radical SAM core domain. In terms of domain architecture, TRAM spans 378 to 441 (QTMIGTVQRC…TFSLRGKIVE (64 aa)).

Belongs to the methylthiotransferase family. MiaB subfamily. As to quaternary structure, monomer. Requires [4Fe-4S] cluster as cofactor.

It localises to the cytoplasm. It carries out the reaction N(6)-dimethylallyladenosine(37) in tRNA + (sulfur carrier)-SH + AH2 + 2 S-adenosyl-L-methionine = 2-methylsulfanyl-N(6)-dimethylallyladenosine(37) in tRNA + (sulfur carrier)-H + 5'-deoxyadenosine + L-methionine + A + S-adenosyl-L-homocysteine + 2 H(+). Functionally, catalyzes the methylthiolation of N6-(dimethylallyl)adenosine (i(6)A), leading to the formation of 2-methylthio-N6-(dimethylallyl)adenosine (ms(2)i(6)A) at position 37 in tRNAs that read codons beginning with uridine. The polypeptide is tRNA-2-methylthio-N(6)-dimethylallyladenosine synthase (Neisseria gonorrhoeae (strain ATCC 700825 / FA 1090)).